The chain runs to 745 residues: Jacalin-related lectin 4 (745 aa).

Jacalin-type lectin domains follow at residues 2 to 148 (AQKL…YFAP), 151 to 294 (PTKF…YFSP), 307 to 448 (AEKL…YFVT), 451 to 594 (PTKF…YFSR), and 601 to 744 (AETL…YVMP).

This sequence belongs to the jacalin lectin family.

The protein is Jacalin-related lectin 4 (JAL4) of Arabidopsis thaliana (Mouse-ear cress).